A 375-amino-acid chain; its full sequence is Odorant receptor 10 (375 aa).

6 helical membrane passes run 32–52, 58–78, 125–145, 167–187, 250–270, and 279–299; these read ISIIPVTVMTFFMFLDLGHSW, VIIKGYFAVLYFNAVLRTLIL, NLALGAIISTCFTVYPMFTGV, IIYLVQVVLTFPGCCMYIPFT, YICFVEFLSFGLMLCALLFLL, and IVIVAAYIFMIISQIFAFYWH.

Belongs to the insect chemoreceptor superfamily. Heteromeric odorant receptor channel (TC 1.A.69) family. As to expression, expressed in female antenna, maxillary palp and proboscis. Expressed in female body. Expressed in male tissues.

It localises to the cell membrane. Odorant receptor which complexes with Orco, a coreceptor, to form odorant-sensing units, providing sensitive and prolonged odorant signaling and calcium permeability. Can sense indole, 1-octen-3-ol, 3-methyindole and an insect repellent DEET. The protein is Odorant receptor 10 of Aedes albopictus (Asian tiger mosquito).